A 270-amino-acid chain; its full sequence is L-fucose dehydrogenase (270 aa).

The NAD(+) site is built by Arg-19, Ile-21, Asp-40, Lys-41, Asp-62, Val-63, Asn-89, Tyr-154, Lys-158, Ile-187, Thr-189, and Leu-191.

Belongs to the short-chain dehydrogenases/reductases (SDR) family.

The enzyme catalyses L-fucose + NAD(+) = L-fucono-1,5-lactone + NADH + H(+). It carries out the reaction D-arabinose + NAD(+) = D-arabinono-1,5-lactone + NADH + H(+). The catalysed reaction is L-galactose + NAD(+) = L-galactono-1,5-lactone + NADH + H(+). Functionally, catalyzes the NAD(+)-dependent oxidation of L-fucose, yielding L-fucono-1,5-lactone, which rapidly converts spontaneously to L-fucone-1,4-lactone. Does not use NADPH. Displays low activity on L-fucose, D-arabinose and L-galactose compared with rabbit and human. This is consitent with the low L-fucose metabolism observed in this species. In Rattus norvegicus (Rat), this protein is L-fucose dehydrogenase (Hsd17b14).